A 365-amino-acid polypeptide reads, in one-letter code: 3-dehydroquinate synthase (365 aa).

Residues 69–74, 103–107, 127–128, lysine 140, and lysine 149 each bind NAD(+); these read DGEAHK, GVIGD, and TT. Residues glutamate 182, histidine 245, and histidine 262 each contribute to the Zn(2+) site.

It belongs to the sugar phosphate cyclases superfamily. Dehydroquinate synthase family. Co(2+) is required as a cofactor. It depends on Zn(2+) as a cofactor. The cofactor is NAD(+).

It is found in the cytoplasm. It carries out the reaction 7-phospho-2-dehydro-3-deoxy-D-arabino-heptonate = 3-dehydroquinate + phosphate. It participates in metabolic intermediate biosynthesis; chorismate biosynthesis; chorismate from D-erythrose 4-phosphate and phosphoenolpyruvate: step 2/7. Its function is as follows. Catalyzes the conversion of 3-deoxy-D-arabino-heptulosonate 7-phosphate (DAHP) to dehydroquinate (DHQ). The chain is 3-dehydroquinate synthase from Pseudomonas putida (strain ATCC 700007 / DSM 6899 / JCM 31910 / BCRC 17059 / LMG 24140 / F1).